Consider the following 514-residue polypeptide: 2-isopropylmalate synthase (514 aa).

A Pyruvate carboxyltransferase domain is found at 5-267 (LVIFDTTLRD…DTRIHTPEIL (263 aa)). Mn(2+)-binding residues include Asp14, His202, His204, and Asn238. The interval 394-514 (RLVALKVGTQ…GSKEHPQAHV (121 aa)) is regulatory domain.

This sequence belongs to the alpha-IPM synthase/homocitrate synthase family. LeuA type 1 subfamily. As to quaternary structure, homodimer. The cofactor is Mn(2+).

The protein localises to the cytoplasm. The enzyme catalyses 3-methyl-2-oxobutanoate + acetyl-CoA + H2O = (2S)-2-isopropylmalate + CoA + H(+). It participates in amino-acid biosynthesis; L-leucine biosynthesis; L-leucine from 3-methyl-2-oxobutanoate: step 1/4. In terms of biological role, catalyzes the condensation of the acetyl group of acetyl-CoA with 3-methyl-2-oxobutanoate (2-ketoisovalerate) to form 3-carboxy-3-hydroxy-4-methylpentanoate (2-isopropylmalate). This Hydrogenovibrio crunogenus (strain DSM 25203 / XCL-2) (Thiomicrospira crunogena) protein is 2-isopropylmalate synthase.